Consider the following 887-residue polypeptide: Pyruvate, phosphate dikinase 2 (887 aa).

Threonine 467 carries the phosphothreonine; by PDRP1 modification. The active-site Tele-phosphohistidine intermediate is the histidine 469. 7 residues coordinate substrate: arginine 575, arginine 632, glutamate 761, glycine 782, threonine 783, asparagine 784, and aspartate 785. Glutamate 761 lines the Mg(2+) pocket. Residue aspartate 785 participates in Mg(2+) binding. Residue cysteine 847 is the Proton donor of the active site.

The protein belongs to the PEP-utilizing enzyme family. Mg(2+) serves as cofactor.

Its subcellular location is the cytoplasm. It carries out the reaction pyruvate + phosphate + ATP = phosphoenolpyruvate + AMP + diphosphate + H(+). In terms of biological role, formation of phosphoenolpyruvate. This is Pyruvate, phosphate dikinase 2 (PPDK2) from Oryza sativa subsp. japonica (Rice).